Consider the following 192-residue polypeptide: Virion infectivity factor (192 aa).

The segment at 14–17 (DRMR) is interaction with host APOBEC3F; F1-box. The interval 40-44 (YRHHY) is interaction with host APOBEC3G; G-box. An interaction with host APOBEC3F and APOBEC3G; FG-box region spans residues 54-72 (EVHIPLGEARLVVTTYWGL). Residues 74 to 79 (TGEKEW) are interaction with host APOBEC3F; F2-box. The interval 75–114 (GEKEWHLGQGVSIEWRKRRYSTQVDPGLADQLIHMYYFDC) is RNA-binding. T96 carries the post-translational modification Phosphothreonine; by host MAP4K1. H108, C114, C133, and H139 together coordinate Zn(2+). The HCCH motif signature appears at 108–139 (HMYYFDCFAESAIRKAILGHIVSPSCEYQAGH). Position 144 is a phosphoserine; by host (S144). Residues 144–153 (SLQYLALAAL) carry the BC-box-like motif motif. Residues 151-164 (AALIAPKKIKPPLP) are multimerization. The interval 151 to 180 (AALIAPKKIKPPLPSVRKLTEDRWNKPQKT) is SOCS box-like. A Phosphoserine; by host MAP4K1 modification is found at S165. The segment at 165 to 192 (SVRKLTEDRWNKPQKTKGRRGSHTMNGH) is disordered. Residues 171-172 (ED) are membrane association. Basic residues predominate over residues 176–186 (KPQKTKGRRGS). At T188 the chain carries Phosphothreonine; by host.

The protein belongs to the primate lentivirus group Vif protein family. In terms of assembly, homomultimer; in vitro and presumably in vivo. Interacts with viral RNA and Pr55Gag precursor; these interactions mediate Vif incorporation into the virion. Interacts with the viral reverse transcriptase. Forms cullin-5-RING E3 ubiquitin-protein ligase complex (ECS complex) by interacting with host CUL5, RBX2, elongin BC complex (ELOB and ELOC) and CBFB/CBF-beta. Within the ECS complex, Vif interacts directly with host CUL5, ELOC and APOBEC (APOBEC3F and APOBEC3G) substrates. The ECS complex also contains some single-stranded RNA (ssRNA) that acts as a glue that bridges Vif with APOBEC (APOBEC3F and APOBEC3G) substrates. Interacts with host UBCE7IP1 isoform 3/ZIN and possibly with SAT. Interacts with host tyrosine kinases HCK and FYN; these interactions may decrease level of phosphorylated APOBEC3G incorporation into virions. Interacts with host ABCE1; this interaction may play a role in protecting viral RNA from damage during viral assembly. Interacts with host MDM2; this interaction targets Vif for degradation by the proteasome. In terms of processing, processed in virion by the viral protease. Highly phosphorylated on serine and threonine residues. Post-translationally, polyubiquitinated and degraded by the proteasome in the presence of APOBEC3G.

Its subcellular location is the host cytoplasm. It localises to the host cell membrane. The protein resides in the virion. Functionally, counteracts the innate antiviral activity of host APOBEC3F and APOBEC3G by promoting their ubiquitination and degradation. Acts as a substrate recognition component of an E3 ubiquitin-protein ligase complex: mechanistically, Vif hijacks a host cullin-5-RING E3 ubiquitin-protein ligase complex (ECS complex) and the transcription coactivator CBFB/CBF-beta to form an active E3 ubiquitin-protein ligase complex that targets APOBEC3G and APOBEC3F for polyubiquitination, leading to their degradation by the proteasome. Vif interaction with APOBEC3G also blocks its cytidine deaminase activity in a proteasome-independent manner, suggesting a dual inhibitory mechanism. May interact directly with APOBEC3G mRNA in order to inhibit its translation. Association with CBFB/CBF-beta also inhibits the transcription coactivator activity of CBFB/CBF-beta. Seems to play a role in viral morphology by affecting the stability of the viral nucleoprotein core. Finally, Vif also contributes to the G2 cell cycle arrest observed in HIV infected cells. This chain is Virion infectivity factor, found in Human immunodeficiency virus type 1 group M subtype D (isolate NDK) (HIV-1).